The chain runs to 139 residues: Peptide methionine sulfoxide reductase MsrB (139 aa).

The MsrB domain maps to 8 to 130 (EREWQRELSP…NSASLQLKTD (123 aa)). Zn(2+) is bound by residues cysteine 47, cysteine 50, cysteine 96, and cysteine 99. Residue cysteine 119 is the Nucleophile of the active site.

It belongs to the MsrB Met sulfoxide reductase family. Requires Zn(2+) as cofactor.

The catalysed reaction is L-methionyl-[protein] + [thioredoxin]-disulfide + H2O = L-methionyl-(R)-S-oxide-[protein] + [thioredoxin]-dithiol. The polypeptide is Peptide methionine sulfoxide reductase MsrB (Acinetobacter baylyi (strain ATCC 33305 / BD413 / ADP1)).